The sequence spans 112 residues: Nitrogen regulatory protein P-II (112 aa).

Serine 49 carries the phosphoserine modification. Tyrosine 51 is modified (O-UMP-tyrosine).

This sequence belongs to the P(II) protein family. As to quaternary structure, homotrimer. Post-translationally, phosphorylation dependent on the nitrogen source and spectral light quality.

Functionally, P-II indirectly controls the transcription of the GS gene (glnA). P-II prevents NR-II-catalyzed conversion of NR-I to NR-I-phosphate, the transcriptional activator of glnA. When P-II is phosphorylated, these events are reversed. In nitrogen-limiting conditions, when the ratio of Gln to 2-ketoglutarate decreases, P-II is phosphorylated which allows the deadenylation of glutamine synthetase (GS), thus activating the enzyme. The sequence is that of Nitrogen regulatory protein P-II (glnB) from Microchaete diplosiphon (Fremyella diplosiphon).